Consider the following 144-residue polypeptide: L-fucose mutarotase (144 aa).

The Proton donor role is filled by H22. Residues D30, R109, and 131–133 (YGN) contribute to the substrate site.

Belongs to the RbsD / FucU family. FucU mutarotase subfamily. Homodecamer.

The protein localises to the cytoplasm. The catalysed reaction is alpha-L-fucose = beta-L-fucose. The protein operates within carbohydrate metabolism; L-fucose metabolism. In terms of biological role, involved in the anomeric conversion of L-fucose. The protein is L-fucose mutarotase of Haemophilus influenzae (strain PittEE).